A 292-amino-acid chain; its full sequence is Homeobox-leucine zipper protein HOX19 (292 aa).

Disordered regions lie at residues 14-85 (LALG…HSVS), 99-133 (RERAEEADGERVSSTAAGRDDDDDGSTRKKLRLTK), and 217-236 (FAPPPPSSAAHQPSPAPPAP). Low complexity predominate over residues 28 to 74 (TDAAAAHRGGCRRPSPSSQCPPLEPSLTLSLPDDAAAGAAATATATA). Residues 99-109 (RERAEEADGER) show a composition bias toward basic and acidic residues. A DNA-binding region (homeobox) is located at residues 124 to 183 (STRKKLRLTKEQSALLEDRFREHSTLNPKQKVALAKQLNLRPRQVEVWFQNRRARTKLKQ). Residues 182–226 (KQTEVDCEFLKRCCETLTEENRRLQRELQELRALKFAPPPPSSAA) form a leucine-zipper region.

The protein belongs to the HD-ZIP homeobox family. Class II subfamily. In terms of tissue distribution, expressed in seedlings, roots, stems, leaf sheaths and blades and panicles.

It is found in the nucleus. Probable transcription factor. The protein is Homeobox-leucine zipper protein HOX19 (HOX19) of Oryza sativa subsp. japonica (Rice).